The chain runs to 476 residues: Siroheme synthase (476 aa).

The precorrin-2 dehydrogenase /sirohydrochlorin ferrochelatase stretch occupies residues 1 to 207; that stretch reads MTANALFPLF…QRHAEAEAVL (207 aa). NAD(+)-binding positions include 25-26 and 46-47; these read KV and PS. The residue at position 132 (Ser132) is a Phosphoserine. Residues 220–476 form a uroporphyrinogen-III C-methyltransferase region; sequence GSVTLVGAGA…SAPCPPARIL (257 aa). Residue Asp252 is the Proton acceptor of the active site. Residue Lys274 is the Proton donor of the active site. Residues 305–307, Val310, 335–336, Met387, and Gly416 each bind S-adenosyl-L-methionine; these read GGD and TA.

In the N-terminal section; belongs to the precorrin-2 dehydrogenase / sirohydrochlorin ferrochelatase family. It in the C-terminal section; belongs to the precorrin methyltransferase family.

The enzyme catalyses uroporphyrinogen III + 2 S-adenosyl-L-methionine = precorrin-2 + 2 S-adenosyl-L-homocysteine + H(+). It carries out the reaction precorrin-2 + NAD(+) = sirohydrochlorin + NADH + 2 H(+). The catalysed reaction is siroheme + 2 H(+) = sirohydrochlorin + Fe(2+). It functions in the pathway cofactor biosynthesis; adenosylcobalamin biosynthesis; precorrin-2 from uroporphyrinogen III: step 1/1. It participates in cofactor biosynthesis; adenosylcobalamin biosynthesis; sirohydrochlorin from precorrin-2: step 1/1. Its pathway is porphyrin-containing compound metabolism; siroheme biosynthesis; precorrin-2 from uroporphyrinogen III: step 1/1. The protein operates within porphyrin-containing compound metabolism; siroheme biosynthesis; siroheme from sirohydrochlorin: step 1/1. It functions in the pathway porphyrin-containing compound metabolism; siroheme biosynthesis; sirohydrochlorin from precorrin-2: step 1/1. Functionally, multifunctional enzyme that catalyzes the SAM-dependent methylations of uroporphyrinogen III at position C-2 and C-7 to form precorrin-2 via precorrin-1. Then it catalyzes the NAD-dependent ring dehydrogenation of precorrin-2 to yield sirohydrochlorin. Finally, it catalyzes the ferrochelation of sirohydrochlorin to yield siroheme. In Xylella fastidiosa (strain M12), this protein is Siroheme synthase.